Here is a 418-residue protein sequence, read N- to C-terminus: Beta-arrestin-1 (418 aa).

Residues 1–163 (MGDKGTRVFK…LEEKIHKRNS (163 aa)) are interaction with SRC. An interaction with CHRM2 region spans residues 45-86 (PEYLKERRVYVTLTCAFRYGREDLDVLGLTFRKDLFVANVQS). Y47 is subject to Phosphotyrosine. 1D-myo-inositol hexakisphosphate is bound by residues K250, M255, K324, and K326. Residues 318-418 (IVSYKVKVKL…GTGSPHLNNR (101 aa)) are interaction with TRAF6. Disordered regions lie at residues 353-375 (HPKPKEEPPHREVPESETPVDTN) and 397-418 (KGMKDDKDEEDDGTGSPHLNNR). A compositionally biased stretch (basic and acidic residues) spans 355–366 (KPKEEPPHREVP). S412 is subject to Phosphoserine.

The protein belongs to the arrestin family. Monomer. Homodimer. Homooligomer; the self-association is mediated by InsP6-binding. Heterooligomer with ARRB2; the association is mediated by InsP6-binding. Interacts with ADRB2 (phosphorylated). Interacts with CHRM2 (phosphorylated). Interacts with LHCGR. Interacts with CYTH2 and CASR. Interacts with AP2B1 (dephosphorylated); phosphorylation of AP2B1 disrupts the interaction. Interacts (dephosphorylated at Ser-412) with CLTC. Interacts with CCR2 and GRK2. Interacts with CRR5. Interacts with PTAFR (phosphorylated on serine residues). Interacts with CLTC and MAP2K3. Interacts with CREB1. Interacts with TRAF6. Interacts with IGF1R and MDM2. Interacts with C5AR1. Interacts with PDE4D. Interacts with SRC (via the SH3 domain and the protein kinase domain); the interaction is independent of the phosphorylation state of SRC C-terminus. Interacts with TACR1. Interacts with RAF1. Interacts with DVL1; the interaction is enhanced by phosphorylation of DVL1. Interacts with DVL2; the interaction is enhanced by phosphorylation of DVL2. Interacts with IGF1R. Interacts with CHUK, IKBKB and MAP3K14. Associates with MAP kinase p38. Part of a MAPK signaling complex consisting of TACR1, ARRB1, SRC, MAPK1 (activated) and MAPK3 (activated). Part of a MAPK signaling complex consisting of F2RL1, ARRB1, RAF1, MAPK1 (activated) and MAPK3 (activated). Interacts with GPR143. Interacts with MAP2K4/MKK4. Interacts with HCK and CXCR1 (phosphorylated). Interacts with ACKR3 and ACKR4. Interacts with ARRDC1; the interaction is direct. Interacts with GPR61, GPR62 and GPR135. Constitutively phosphorylated at in the cytoplasm. At the plasma membrane, is rapidly dephosphorylated, a process that is required for clathrin binding and ADRB2 endocytosis but not for ADRB2 binding and desensitization. Once internalized, is rephosphorylated. Post-translationally, the ubiquitination status appears to regulate the formation and trafficking of beta-arrestin-GPCR complexes and signaling. Ubiquitination appears to occur GPCR-specific. Ubiquitinated by MDM2; the ubiquitination is required for rapid internalization of ADRB2. Deubiquitinated by USP33; the deubiquitination leads to a dissociation of the beta-arrestin-GPCR complex. Stimulation of a class A GPCR, such as ADRB2, induces transient ubiquitination and subsequently promotes association with USP33.

Its subcellular location is the cytoplasm. The protein resides in the nucleus. It localises to the cell membrane. It is found in the membrane. The protein localises to the clathrin-coated pit. Its subcellular location is the cell projection. The protein resides in the pseudopodium. It localises to the cytoplasmic vesicle. Its function is as follows. Functions in regulating agonist-mediated G-protein coupled receptor (GPCR) signaling by mediating both receptor desensitization and resensitization processes. During homologous desensitization, beta-arrestins bind to the GPRK-phosphorylated receptor and sterically preclude its coupling to the cognate G-protein; the binding appears to require additional receptor determinants exposed only in the active receptor conformation. The beta-arrestins target many receptors for internalization by acting as endocytic adapters (CLASPs, clathrin-associated sorting proteins) and recruiting the GPRCs to the adapter protein 2 complex 2 (AP-2) in clathrin-coated pits (CCPs). However, the extent of beta-arrestin involvement appears to vary significantly depending on the receptor, agonist and cell type. Internalized arrestin-receptor complexes traffic to intracellular endosomes, where they remain uncoupled from G-proteins. Two different modes of arrestin-mediated internalization occur. Class A receptors, like ADRB2, OPRM1, ENDRA, D1AR and ADRA1B dissociate from beta-arrestin at or near the plasma membrane and undergo rapid recycling. Class B receptors, like AVPR2, AGTR1, NTSR1, TRHR and TACR1 internalize as a complex with arrestin and traffic with it to endosomal vesicles, presumably as desensitized receptors, for extended periods of time. Receptor resensitization then requires that receptor-bound arrestin is removed so that the receptor can be dephosphorylated and returned to the plasma membrane. Involved in internalization of P2RY4 and UTP-stimulated internalization of P2RY2. Involved in phosphorylation-dependent internalization of OPRD1 ands subsequent recycling. Involved in the degradation of cAMP by recruiting cAMP phosphodiesterases to ligand-activated receptors. Beta-arrestins function as multivalent adapter proteins that can switch the GPCR from a G-protein signaling mode that transmits short-lived signals from the plasma membrane via small molecule second messengers and ion channels to a beta-arrestin signaling mode that transmits a distinct set of signals that are initiated as the receptor internalizes and transits the intracellular compartment. Acts as a signaling scaffold for MAPK pathways such as MAPK1/3 (ERK1/2). ERK1/2 activated by the beta-arrestin scaffold is largely excluded from the nucleus and confined to cytoplasmic locations such as endocytic vesicles, also called beta-arrestin signalosomes. Recruits c-Src/SRC to ADRB2 resulting in ERK activation. GPCRs for which the beta-arrestin-mediated signaling relies on both ARRB1 and ARRB2 (codependent regulation) include ADRB2, F2RL1 and PTH1R. For some GPCRs the beta-arrestin-mediated signaling relies on either ARRB1 or ARRB2 and is inhibited by the other respective beta-arrestin form (reciprocal regulation). Inhibits ERK1/2 signaling in AGTR1- and AVPR2-mediated activation (reciprocal regulation). Is required for SP-stimulated endocytosis of NK1R and recruits c-Src/SRC to internalized NK1R resulting in ERK1/2 activation, which is required for the antiapoptotic effects of SP. Is involved in proteinase-activated F2RL1-mediated ERK activity. Acts as a signaling scaffold for the AKT1 pathway. Is involved in alpha-thrombin-stimulated AKT1 signaling. Is involved in IGF1-stimulated AKT1 signaling leading to increased protection from apoptosis. Involved in activation of the p38 MAPK signaling pathway and in actin bundle formation. Involved in F2RL1-mediated cytoskeletal rearrangement and chemotaxis. Involved in AGTR1-mediated stress fiber formation by acting together with GNAQ to activate RHOA. Appears to function as signaling scaffold involved in regulation of MIP-1-beta-stimulated CCR5-dependent chemotaxis. Involved in attenuation of NF-kappa-B-dependent transcription in response to GPCR or cytokine stimulation by interacting with and stabilizing CHUK. May serve as nuclear messenger for GPCRs. Involved in OPRD1-stimulated transcriptional regulation by translocating to CDKN1B and FOS promoter regions and recruiting EP300 resulting in acetylation of histone H4. Involved in regulation of LEF1 transcriptional activity via interaction with DVL1 and/or DVL2 Also involved in regulation of receptors other than GPCRs. Involved in Toll-like receptor and IL-1 receptor signaling through the interaction with TRAF6 which prevents TRAF6 autoubiquitination and oligomerization required for activation of NF-kappa-B and JUN. Involved in IL8-mediated granule release in neutrophils. Binds phosphoinositides. Binds inositolhexakisphosphate (InsP6). Required for atypical chemokine receptor ACKR2-induced RAC1-LIMK1-PAK1-dependent phosphorylation of cofilin (CFL1) and for the up-regulation of ACKR2 from endosomal compartment to cell membrane, increasing its efficiency in chemokine uptake and degradation. Involved in the internalization of the atypical chemokine receptor ACKR3. Negatively regulates the NOTCH signaling pathway by mediating the ubiquitination and degradation of NOTCH1 by ITCH. Participates in the recruitment of the ubiquitin-protein ligase to the receptor. This chain is Beta-arrestin-1 (Arrb1), found in Mus musculus (Mouse).